A 339-amino-acid polypeptide reads, in one-letter code: Phenylalanine--tRNA ligase alpha subunit (339 aa).

Residue E254 participates in Mg(2+) binding.

Belongs to the class-II aminoacyl-tRNA synthetase family. Phe-tRNA synthetase alpha subunit type 1 subfamily. Tetramer of two alpha and two beta subunits. Mg(2+) serves as cofactor.

Its subcellular location is the cytoplasm. It catalyses the reaction tRNA(Phe) + L-phenylalanine + ATP = L-phenylalanyl-tRNA(Phe) + AMP + diphosphate + H(+). The chain is Phenylalanine--tRNA ligase alpha subunit from Clostridium perfringens (strain ATCC 13124 / DSM 756 / JCM 1290 / NCIMB 6125 / NCTC 8237 / Type A).